We begin with the raw amino-acid sequence, 1035 residues long: MAVTLDKEAYYRRIKRFFGSWKKGDDEFANVDAIVVSVGVDEEIVYAKSTALQTWLFGYELTDTIMVFCEEKILFMASKKKVEFLKQIANTKGNENANGTPAITLLVREKQNESNKGNFDKMIEAIKVSKKGKRIGVFIKDKFPGDFMKSWYDILNKESFEKVDISASVAYTIAVKEEGELNLMKKAASITSDVFSKFFKDRVMEIVDADEKVRHGKLAESVEKAIEDKKYLGGTDPSTIEMCYPPIIQSGGNYNLKFSVVSDKNHMHFGAITCALGIRYKSYCSNLVRTLMVDPTQEMQENYNFLLQLQEELLKELKHGAKICDAYQVIMDQVKKQKPDLMSKITKTLGFAMGIEFREGSLVINNKNQYKLKKGMVFSVHLGLAELNNKMGKKPEEKTYALFVGDTVLVNEEGAATVLTNVKKKVKNVGIFLKKEDEEEEEEEKDEAEDLLGRGSRAAALLTERTRNEMTAEEKRRTHQKELATQLNDEAKRRLTEQKGGQQTMKARKSNVSYKNASQVPKEPELREMKLYIDKKYETVIMPVFGISTPFHIATIKNISMSVEGDYTYLRINFFCPGSALGRNEGNIFPNPEATFVKEITYRASNVKTPGDPSVPSLNLQNAFRIIKEVQKRYKTREAEEKEKEGIVKQDSLVINLNRSNPKLKDLYIRPNIAQKRMQGSLEAHVNGFRFTSVRGDKVDILYNNIKHALFQPCDGEMIIVLHFHLKNAIMFGKKRHTDVQFYTEVGEITTDLGKHQHMHDRDDLYAEQLEREMRHKLKTAFKNFIEKVESLTKEDLEFEIPFRDLGFNGAPYRSTCLLQPTSSSLVNTTEWPPFVVTLDEVELVHFERVQFHLKNFDMVIVYKEYGKKVTMINAIPMASLDPIKEWLNSCDIKYTEGVQSLNWTKIMKTIVDDPEGFFEQGGWSFLEPDGEGSDAAEGDSESELDDETFNPSEDEEEEEEDSDEDYSDETEDSVDSEESADSEEESGKDWDELEEEARKADRESLYEEVEEQKSGNRKRKGHAPLPNPSKKRKK.

A coiled-coil region spans residues F432–G500. Disordered regions lie at residues A491–V520 and E920–K1035. Residues K499–Q519 are compositionally biased toward polar residues. Acidic residues predominate over residues P929 to E985. Residues E986–L1006 are compositionally biased toward basic and acidic residues.

It belongs to the peptidase M24 family. SPT16 subfamily. In terms of assembly, component of the FACT complex (also called the DUF complex), a stable heterodimer of ssrp1 and supt16h. May also be a component of a ck2-spt16-ssrp1 complex composed of ssrp1, supt16h, csnk2a1, csnk2a2 and csnk2b. The FACT complex may also interact with vcp.

It localises to the nucleus. The protein resides in the chromosome. In terms of biological role, component of the FACT complex, a general chromatin factor that acts to reorganize nucleosomes. The FACT complex is involved in multiple processes that require DNA as a template such as mRNA elongation, DNA replication and DNA repair. During transcription elongation the FACT complex acts as a histone chaperone that both destabilizes and restores nucleosomal structure. It facilitates the passage of RNA polymerase II and transcription by promoting the dissociation of one histone H2A-H2B dimer from the nucleosome, then subsequently promotes the reestablishment of the nucleosome following the passage of RNA polymerase II. The protein is FACT complex subunit SPT16 (supt16h) of Xenopus laevis (African clawed frog).